The following is a 584-amino-acid chain: Adenine deaminase (584 aa).

Belongs to the metallo-dependent hydrolases superfamily. Adenine deaminase family. Requires Mn(2+) as cofactor.

The catalysed reaction is adenine + H2O + H(+) = hypoxanthine + NH4(+). The sequence is that of Adenine deaminase from Methanococcoides burtonii (strain DSM 6242 / NBRC 107633 / OCM 468 / ACE-M).